A 474-amino-acid polypeptide reads, in one-letter code: Immunoglobulin heavy constant mu (474 aa).

Residues 1-105 (GSASAPTLFP…NKEKNVPLPV (105 aa)) form a CH1 region. At 1–450 (GSASAPTLFP…EEGFENLWAT (450 aa)) the chain is on the extracellular side. Ig-like domains are found at residues 6–102 (PTLF…KNVP), 111–211 (PKVS…QNAS), 229–319 (PSFA…QTIS), and 329–430 (PDVY…RTVD). Intrachain disulfides connect C28–C88 and C134–C197. N46 is a glycosylation site (N-linked (GlcNAc...) (complex) asparagine). The CH2 stretch occupies residues 106–217 (IAELPPKVSV…QNASSMCVPD (112 aa)). N209 carries N-linked (GlcNAc...) (complex) asparagine glycosylation. A CH3 region spans residues 218 to 323 (QDTAIRVFAI…LKQTISRPKG (106 aa)). 2 cysteine pairs are disulfide-bonded: C244–C303 and C351–C413. Residues N272 and N279 are each glycosylated (N-linked (GlcNAc...) asparagine). Residues 324-452 (VALHRPDVYL…GFENLWATAS (129 aa)) are CH4. An important for IgM oligomerization region spans residues 437-453 (VSADEEGFENLWATAST). Residue D440 is glycosylated (N-linked (GlcNAc...) asparagine). The chain crosses the membrane as a helical span at residues 451–471 (ASTFIVLFLLSLFYSTTVTLF). Residues 472-474 (KVK) lie on the Cytoplasmic side of the membrane.

The basic structural unit of both sIgM and mIgM molecules consists of two identical heavy chains and two identical light chains; disulfide-linked. N-terminal variable regions of the heavy and light chains form the antigen binding sites, whereas the C-terminal constant regions of the heavy chains interact with immune receptors to mediate effector functions. In terms of assembly, part of IgM antibody. Forms high order oligomers, homopentamers stabilized by the JCHAIN and homohexamers that lack JCHAIN. The oligomerization amplifies an inherently low affinity of IgM antibodies for the antigen by multi-point attachment (avidity). Adjacent IgM protomers associate via interchain disulfide links to form an asymmetric pentameric structure with a 50 degree gap. A single copy of JCHAIN is covalently linked to the first and the fifth IgM monomers via interchain disulfide bonds thus closing the pentamer ring. Only JCHAIN-containing IgM binds PIGR secretory component (via D1-CDR1 region); this interaction is a prerequisite for IgM transcytosis across mucosal epithelium. Pentameric sIgM interacts (via CH4 domain) with FCRM (via Ig-like domain); the interaction is glycan-independent and multivalent theoretically involving up to eight binding sites for the IgM pentamer. Interacts with FCAMR; this interaction facilitates the endocytosis of IgM-coated microbes or IgM-antigen immune complexes. Antigen-bound IgM (via the Fc region) binds to globular domains of C1q component of the complement system, all three modules C1QA, C1QB and C1QC being involved in IgM binding; this interaction is multivalent. Pentameric sIgM (via Fc region) interacts with CD5L (via SRCR2) through interchain disulfide-linkages; this interaction protects CD5L from renal excretion and provides for high levels of CD5L in circulation. As to quaternary structure, part of IgM B cell receptor complex on pre-B cells, immature and mature B cells. The BCR complex consists of one membrane-bound IgM molecule responsible for antigen binding, non-covalently associated with CD79A and CD79B signaling chains. Post-translationally, N-glycosylated; important for IgM secretion and its localization at the plasma membrane. The interaction with FCMR is glycan-independent.

It localises to the secreted. The protein localises to the cell membrane. In terms of biological role, constant region of immunoglobulin heavy chains. Immunoglobulins, also known as antibodies, are membrane-bound or secreted glycoproteins produced by B lymphocytes. In the recognition phase of humoral immunity, the membrane-bound immunoglobulins serve as receptors which, upon binding of a specific antigen, trigger the clonal expansion and differentiation of B lymphocytes into immunoglobulins-secreting plasma cells. Secreted immunoglobulins mediate the effector phase of humoral immunity, which results in the elimination of bound antigens. The antigen binding site is formed by the variable domain of one heavy chain, together with that of its associated light chain. Thus, each immunoglobulin has two antigen binding sites with remarkable affinity for a particular antigen. The variable domains are assembled by a process called V-(D)-J rearrangement and can then be subjected to somatic hypermutations which, after exposure to antigen and selection, allow affinity maturation for a particular antigen. Constant region of secreted IgM (sIgM), also known as the Fc region of IgM antibody. Able to multimerize, forms high order polymers, mainly pentamers and occasionally hexamers, providing for multivalency and high avidity recognition of antigens. Natural sIgM are polyreactive and recognize conserved self- and pathogen-derived structures, whereas immune sIgM are secreted only upon exposure to pathogens and are antigen-specific. Both natural and immune sIgM are required for an efficient humoral immune response to infection. Mediates sIgM effector functions mostly via Fc receptors and the complement system. On lymphoid cells binds high-affinity Fc receptor FCMR and promotes induction of an efficient neutralizing IgG response while maintaining tolerance to self-antigens. Recruits C1q complement component to initiate the classical complement pathway, facilitating the recognition and neutralization of pathogens by the host. Together with C1q and mannose-binding lectin promotes the phagocytosis of apoptotic cells by macrophages, ensuring the clearance of potential autoimmune epitopes from tissues. Involved in mucosal immunity. It is transported by transcytosis across mucosal epithelium by PIGR and secreted on the apical side in complex with PIGR secretory component to scan mucosal lining for pathogens. IgM-antigen complexes undergo FCMR-mediated retrotranscytosis across mucosal M cells toward antigen-presenting cells in mucosal lymphoid tissues. Functionally, constant region of membrane-bound IgM, part of the B cell receptor complex (BCR). IgM BCR provides constitutive tonic signaling for B cell survival. Mediates pre-BCR signaling that regulates B cell selection and rearrangement of Ig genes via allelic exclusion. This chain is Immunoglobulin heavy constant mu, found in Homo sapiens (Human).